The following is a 503-amino-acid chain: Lysine--tRNA ligase (503 aa).

Residues E414 and E421 each contribute to the Mg(2+) site.

Belongs to the class-II aminoacyl-tRNA synthetase family. In terms of assembly, homodimer. Mg(2+) is required as a cofactor.

It localises to the cytoplasm. The catalysed reaction is tRNA(Lys) + L-lysine + ATP = L-lysyl-tRNA(Lys) + AMP + diphosphate. The polypeptide is Lysine--tRNA ligase (Neisseria meningitidis serogroup A / serotype 4A (strain DSM 15465 / Z2491)).